The primary structure comprises 374 residues: Queuine tRNA-ribosyltransferase (374 aa).

Asp89 functions as the Proton acceptor in the catalytic mechanism. Residues 89 to 93 (DSGGF), Asp143, Gln187, and Gly214 each bind substrate. Residues 245–251 (GVGKPED) form an RNA binding region. Catalysis depends on Asp264, which acts as the Nucleophile. The interval 269–273 (TRNAR) is RNA binding; important for wobble base 34 recognition. Positions 302, 304, 307, and 333 each coordinate Zn(2+).

The protein belongs to the queuine tRNA-ribosyltransferase family. Homodimer. Within each dimer, one monomer is responsible for RNA recognition and catalysis, while the other monomer binds to the replacement base PreQ1. It depends on Zn(2+) as a cofactor.

It carries out the reaction 7-aminomethyl-7-carbaguanine + guanosine(34) in tRNA = 7-aminomethyl-7-carbaguanosine(34) in tRNA + guanine. Its pathway is tRNA modification; tRNA-queuosine biosynthesis. Its function is as follows. Catalyzes the base-exchange of a guanine (G) residue with the queuine precursor 7-aminomethyl-7-deazaguanine (PreQ1) at position 34 (anticodon wobble position) in tRNAs with GU(N) anticodons (tRNA-Asp, -Asn, -His and -Tyr). Catalysis occurs through a double-displacement mechanism. The nucleophile active site attacks the C1' of nucleotide 34 to detach the guanine base from the RNA, forming a covalent enzyme-RNA intermediate. The proton acceptor active site deprotonates the incoming PreQ1, allowing a nucleophilic attack on the C1' of the ribose to form the product. After dissociation, two additional enzymatic reactions on the tRNA convert PreQ1 to queuine (Q), resulting in the hypermodified nucleoside queuosine (7-(((4,5-cis-dihydroxy-2-cyclopenten-1-yl)amino)methyl)-7-deazaguanosine). The sequence is that of Queuine tRNA-ribosyltransferase from Shewanella loihica (strain ATCC BAA-1088 / PV-4).